A 514-amino-acid polypeptide reads, in one-letter code: Type-2 serine--tRNA ligase (514 aa).

Residue alanine 313 participates in L-serine binding. Cysteine 315 provides a ligand contact to Zn(2+). Arginine 344 contacts L-serine. Residues 344-346 (RWE) and 355-356 (RV) contribute to the ATP site. 361–363 (RGE) is a binding site for L-serine. Residues glutamate 363 and cysteine 470 each coordinate Zn(2+). Arginine 477 contacts ATP.

The protein belongs to the class-II aminoacyl-tRNA synthetase family. Type-2 seryl-tRNA synthetase subfamily. In terms of assembly, homodimer. Zn(2+) is required as a cofactor.

It is found in the cytoplasm. It carries out the reaction tRNA(Ser) + L-serine + ATP = L-seryl-tRNA(Ser) + AMP + diphosphate + H(+). The catalysed reaction is tRNA(Sec) + L-serine + ATP = L-seryl-tRNA(Sec) + AMP + diphosphate + H(+). It participates in aminoacyl-tRNA biosynthesis; selenocysteinyl-tRNA(Sec) biosynthesis; L-seryl-tRNA(Sec) from L-serine and tRNA(Sec): step 1/1. Its function is as follows. Catalyzes the attachment of serine to tRNA(Ser). Is also able to aminoacylate tRNA(Sec) with serine, to form the misacylated tRNA L-seryl-tRNA(Sec), which will be further converted into selenocysteinyl-tRNA(Sec). The sequence is that of Type-2 serine--tRNA ligase (serS) from Methanococcus maripaludis (strain DSM 14266 / JCM 13030 / NBRC 101832 / S2 / LL).